The following is a 357-amino-acid chain: SPbeta prophage-derived pesticidal crystal protein-like YokG (357 aa).

It belongs to the cry6A endotoxin family.

This Bacillus subtilis (strain 168) protein is SPbeta prophage-derived pesticidal crystal protein-like YokG (yokG).